We begin with the raw amino-acid sequence, 218 residues long: Adenylate kinase (218 aa).

Residue 10–15 participates in ATP binding; the sequence is GAGKGT. The NMP stretch occupies residues 30 to 59; sequence STGDMIRETIKSGSALGQELKKVLDAGELV. AMP-binding positions include T31, R36, 57 to 59, and Q92; that span reads ELV. Residues 122–159 form an LID region; the sequence is GRRIHPASGRTYHTKFNPPKVADKDDVTGEPLITRTDD. ATP-binding positions include R123 and 132 to 133; that span reads TY. AMP is bound by residues R156 and R167. Residue Q202 participates in ATP binding.

This sequence belongs to the adenylate kinase family. In terms of assembly, monomer.

It is found in the cytoplasm. It carries out the reaction AMP + ATP = 2 ADP. The protein operates within purine metabolism; AMP biosynthesis via salvage pathway; AMP from ADP: step 1/1. In terms of biological role, catalyzes the reversible transfer of the terminal phosphate group between ATP and AMP. Plays an important role in cellular energy homeostasis and in adenine nucleotide metabolism. This Francisella tularensis subsp. tularensis (strain FSC 198) protein is Adenylate kinase.